Reading from the N-terminus, the 137-residue chain is Large ribosomal subunit protein uL16 (137 aa).

The protein belongs to the universal ribosomal protein uL16 family. In terms of assembly, part of the 50S ribosomal subunit.

Its function is as follows. Binds 23S rRNA and is also seen to make contacts with the A and possibly P site tRNAs. In Cereibacter sphaeroides (strain ATCC 17029 / ATH 2.4.9) (Rhodobacter sphaeroides), this protein is Large ribosomal subunit protein uL16.